The chain runs to 95 residues: Small ribosomal subunit protein uS19 (95 aa).

Belongs to the universal ribosomal protein uS19 family.

In terms of biological role, protein S19 forms a complex with S13 that binds strongly to the 16S ribosomal RNA. In Syntrophobacter fumaroxidans (strain DSM 10017 / MPOB), this protein is Small ribosomal subunit protein uS19.